A 114-amino-acid polypeptide reads, in one-letter code: T cell receptor beta variable 5-4 (114 aa).

Residues methionine 1–threonine 21 form the signal peptide. The region spanning glycine 22–leucine 114 is the Ig-like domain. Cysteine 42 and cysteine 110 are oxidised to a cystine. Residue asparagine 90 is glycosylated (N-linked (GlcNAc...) asparagine).

As to quaternary structure, alpha-beta TR is a heterodimer composed of an alpha and beta chain; disulfide-linked. The alpha-beta TR is associated with the transmembrane signaling CD3 coreceptor proteins to form the TR-CD3 (TcR or TCR). The assembly of alpha-beta TR heterodimers with CD3 occurs in the endoplasmic reticulum where a single alpha-beta TR heterodimer associates with one CD3D-CD3E heterodimer, one CD3G-CD3E heterodimer and one CD247 homodimer forming a stable octameric structure. CD3D-CD3E and CD3G-CD3E heterodimers preferentially associate with TR alpha and TR beta chains, respectively. The association of the CD247 homodimer is the last step of TcR assembly in the endoplasmic reticulum and is required for transport to the cell surface.

It localises to the cell membrane. In terms of biological role, v region of the variable domain of T cell receptor (TR) beta chain that participates in the antigen recognition. Alpha-beta T cell receptors are antigen specific receptors which are essential to the immune response and are present on the cell surface of T lymphocytes. Recognize peptide-major histocompatibility (MH) (pMH) complexes that are displayed by antigen presenting cells (APC), a prerequisite for efficient T cell adaptive immunity against pathogens. Binding of alpha-beta TR to pMH complex initiates TR-CD3 clustering on the cell surface and intracellular activation of LCK that phosphorylates the ITAM motifs of CD3G, CD3D, CD3E and CD247 enabling the recruitment of ZAP70. In turn ZAP70 phosphorylates LAT, which recruits numerous signaling molecules to form the LAT signalosome. The LAT signalosome propagates signal branching to three major signaling pathways, the calcium, the mitogen-activated protein kinase (MAPK) kinase and the nuclear factor NF-kappa-B (NF-kB) pathways, leading to the mobilization of transcription factors that are critical for gene expression and essential for T cell growth and differentiation. The T cell repertoire is generated in the thymus, by V-(D)-J rearrangement. This repertoire is then shaped by intrathymic selection events to generate a peripheral T cell pool of self-MH restricted, non-autoaggressive T cells. Post-thymic interaction of alpha-beta TR with the pMH complexes shapes TR structural and functional avidity. The sequence is that of T cell receptor beta variable 5-4 from Homo sapiens (Human).